Consider the following 934-residue polypeptide: Pesticidal crystal protein Cry1Aa (934 aa).

It belongs to the delta endotoxin family.

Its function is as follows. Promotes colloidosmotic lysis by binding to the midgut epithelial cells of many lepidopteran larvae. This is Pesticidal crystal protein Cry1Aa (cry1Aa) from Bacillus thuringiensis subsp. sotto.